The following is a 240-amino-acid chain: tRNA (guanine-N(1)-)-methyltransferase (240 aa).

S-adenosyl-L-methionine contacts are provided by residues glycine 108 and 127–132 (IGDYVL).

This sequence belongs to the RNA methyltransferase TrmD family. In terms of assembly, homodimer.

It is found in the cytoplasm. It catalyses the reaction guanosine(37) in tRNA + S-adenosyl-L-methionine = N(1)-methylguanosine(37) in tRNA + S-adenosyl-L-homocysteine + H(+). Its function is as follows. Specifically methylates guanosine-37 in various tRNAs. The protein is tRNA (guanine-N(1)-)-methyltransferase of Lactobacillus johnsonii (strain CNCM I-12250 / La1 / NCC 533).